The primary structure comprises 822 residues: BDNF/NT-3 growth factors receptor (822 aa).

Residues 1-31 form the signal peptide; that stretch reads MSSWIRWHGPAMARLWGFCWLVVGFWRAAFA. 2 disulfide bridges follow: Cys32–Cys38 and Cys36–Cys45. The 30-residue stretch at 32–61 folds into the LRRNT domain; sequence CPTSCKCSASRIWCSDPSPGIVAFPRLEPN. Topologically, residues 32-430 are extracellular; that stretch reads CPTSCKCSAS…DVTDKTGREH (399 aa). N-linked (GlcNAc...) asparagine glycans are attached at residues Asn67, Asn95, and Asn121. 2 LRR repeats span residues 92 to 113 and 116 to 137; these read GLRNLTIVDSGLKFVAHKAFLK and NLQHINFTRNKLTSLSRKHFRH. In terms of domain architecture, LRRCT spans 148–196; it reads NPFTCSCDIMWIKTLQEAKSSPDTQDLYCLNESSKNIPLANLQIPNCGL. Cystine bridges form between Cys152/Cys176 and Cys154/Cys194. N-linked (GlcNAc...) asparagine glycosylation is found at Asn178, Asn205, Asn241, Asn254, Asn280, Asn325, Asn338, and Asn412. 2 Ig-like C2-type domains span residues 197–282 and 295–365; these read PSAN…VNLT and PTSD…IAKN. An intrachain disulfide couples Cys218 to Cys266. Cys302 and Cys345 are disulfide-bonded. Residues 431–454 form a helical membrane-spanning segment; it reads LSVYAVVVIASVVGFCLLVMLFLL. Positions 455-466 are interaction with MAPK8IP3/JIP3; that stretch reads KLARHSKFGMKG. The Cytoplasmic segment spans residues 455–822; that stretch reads KLARHSKFGM…ASPVYLDILG (368 aa). A disordered region spans residues 475–498; it reads DDSASPLHHISNGSNTPSSSEGGP. Residues 485–495 show a composition bias toward polar residues; sequence SNGSNTPSSSE. A Phosphotyrosine; by autocatalysis modification is found at Tyr516. Residues 538 to 807 form the Protein kinase domain; sequence IVLKRELGEG…KNIKGIHTLL (270 aa). Residues 544-552 and Lys572 each bind ATP; that span reads LGEGAFGKV. Asp676 acts as the Proton acceptor in catalysis. Phosphotyrosine; by autocatalysis is present on residues Tyr702, Tyr706, Tyr707, and Tyr817.

This sequence belongs to the protein kinase superfamily. Tyr protein kinase family. Insulin receptor subfamily. Exists in a dynamic equilibrium between monomeric (low affinity) and dimeric (high affinity) structures. Interacts (phosphorylated upon activation by BDNF) with SHC1; mediates SHC1 phosphorylation and activation. Interacts (phosphorylated upon activation by BDNF) with PLCG1 and/or PLCG2; mediates PLCG1 phosphorylation and activation. Interacts with SH2B1 and SH2B2. Interacts with NGFR; may regulate the ligand specificity of the receptor. Interacts with SORCS2; this interaction is important for normal targeting to post-synaptic densities in response to high-frequency stimulation. Interacts (phosphorylated upon ligand-binding) with SH2D1A; regulates NTRK2. Interacts with SQSTM1 and KIDINS220. Interacts (phosphorylated upon ligand-binding) with FRS2; activates the MAPK signaling pathway. Interacts with APPL1. Interacts with MAPK8IP3/JIP3 and KLC1; interaction with KLC1 is mediated by MAPK8IP3/JIP3. Interacts with SORL1; this interaction facilitates NTRK2 trafficking between synaptic plasma membranes, postsynaptic densities and cell soma, hence positively regulates BDNF signaling. Interacts with SLITRK2. In terms of processing, phosphorylated. Undergoes ligand-mediated autophosphorylation that is required for interaction with SHC1 and PLCG1 and other downstream effectors. Isoform TrkB-T-Shc is not phosphorylated. Ubiquitinated. Undergoes polyubiquitination upon activation; regulated by NGFR. Ubiquitination regulates the internalization of the receptor. Isoform TrkB is expressed in the central and peripheral nervous system. In the central nervous system (CNS), expression is observed in the cerebral cortex, hippocampus, thalamus, choroid plexus, granular layer of the cerebellum, brain stem, and spinal cord. In the peripheral nervous system, it is expressed in many cranial ganglia, the ophthalmic nerve, the vestibular system, multiple facial structures, the submaxillary glands, and dorsal root ganglia. Isoform TrkB-T1 is mainly expressed in the brain but also detected in other tissues including pancreas, kidney and heart. Isoform TrkB-T-Shc is predominantly expressed in the brain.

It is found in the cell membrane. The protein resides in the endosome membrane. Its subcellular location is the early endosome membrane. It localises to the cell projection. The protein localises to the axon. It is found in the dendrite. The protein resides in the cytoplasm. Its subcellular location is the perinuclear region. It localises to the postsynaptic density. It catalyses the reaction L-tyrosyl-[protein] + ATP = O-phospho-L-tyrosyl-[protein] + ADP + H(+). Its activity is regulated as follows. The neuronal activity and the influx of calcium positively regulate the kinase activity and the internalization of the receptor which are both important for active signaling. Regulated by NGFR that may control the internalization of the receptor. NGFR may also stimulate the activation by BDNF compared to NTF3 and NTF4. SH2D1A inhibits the autophosphorylation of the receptor, and alters the recruitment and activation of downstream effectors and signaling cascades. The formation of active receptors dimers able to fully transduce the ligand-mediated signal, may be negatively regulated by the formation of inactive heterodimers with the non-catalytic isoforms. In terms of biological role, receptor tyrosine kinase involved in the development and the maturation of the central and the peripheral nervous systems through regulation of neuron survival, proliferation, migration, differentiation, and synapse formation and plasticity. Receptor for BDNF/brain-derived neurotrophic factor and NTF4/neurotrophin-4. Alternatively can also bind NTF3/neurotrophin-3 which is less efficient in activating the receptor but regulates neuron survival through NTRK2. Upon ligand-binding, undergoes homodimerization, autophosphorylation and activation. Recruits, phosphorylates and/or activates several downstream effectors including SHC1, FRS2, SH2B1, SH2B2 and PLCG1 that regulate distinct overlapping signaling cascades. Through SHC1, FRS2, SH2B1, SH2B2 activates the GRB2-Ras-MAPK cascade that regulates for instance neuronal differentiation including neurite outgrowth. Through the same effectors controls the Ras-PI3 kinase-AKT1 signaling cascade that mainly regulates growth and survival. Through PLCG1 and the downstream protein kinase C-regulated pathways controls synaptic plasticity. Thereby, plays a role in learning and memory by regulating both short term synaptic function and long-term potentiation. PLCG1 also leads to NF-Kappa-B activation and the transcription of genes involved in cell survival. Hence, it is able to suppress anoikis, the apoptosis resulting from loss of cell-matrix interactions. May also play a role in neutrophin-dependent calcium signaling in glial cells and mediate communication between neurons and glia. The chain is BDNF/NT-3 growth factors receptor (NTRK2) from Homo sapiens (Human).